A 283-amino-acid polypeptide reads, in one-letter code: uncharacterized protein (283 aa).

Solcar repeat units lie at residues 14 to 95, 102 to 185, and 190 to 274; these read QPVW…LKHL, NDHA…SEAV, and GLAL…TLQG. A run of 6 helical transmembrane segments spans residues 20–40, 70–90, 105–125, 157–177, 184–204, and 249–266; these read TLAG…FDVI, GNVV…VAFS, AVNF…SYPL, FFPG…CFFM, AVLS…IAGA, and GLSV…ITML.

Belongs to the mitochondrial carrier (TC 2.A.29) family.

It is found in the mitochondrion inner membrane. This is an uncharacterized protein from Schizosaccharomyces pombe (strain 972 / ATCC 24843) (Fission yeast).